The primary structure comprises 579 residues: Arginine--tRNA ligase (579 aa).

Residues 127 to 137 (PNLAKEMHVGH) carry the 'HIGH' region motif.

This sequence belongs to the class-I aminoacyl-tRNA synthetase family. In terms of assembly, monomer.

It is found in the cytoplasm. The catalysed reaction is tRNA(Arg) + L-arginine + ATP = L-arginyl-tRNA(Arg) + AMP + diphosphate. This chain is Arginine--tRNA ligase, found in Ectopseudomonas mendocina (strain ymp) (Pseudomonas mendocina).